Here is a 636-residue protein sequence, read N- to C-terminus: MSKIRSSATMPHRDQPSPASPHVVTLNCIEDCALEQDSLAGVAGVEYVPLSRIADGKIESATAVLLHSLAYLPRAAQRRLRPHQLILCLGSADRAVDSTLAADLGLRLVHVDTSRAEEIADTVMALILGLLRRTHLLSRHALSASGWLGSLQPLCRGMRRCRGMVLGIVGRSVSARYLASRSLAFKMSVLYFDVPEGDEERIRPSRFPRAARRMDTLNDLLAASDVISLHCALTNDTVQILNAECLQHIKPGAFLVNTGSCQLLDDCAVKQLLIDGTIAGCALDGAEGPQWMEAWVKEMPNVLILPRSADYSEEVWMEIREKAISILHSFFLDGVIPSNTVSDEEVEESEASEEEEQSPSKHEKLAIVESTSRQQGESTLTSTEIVRREASELKESLSPGQQHVSQNTAVKPEGRRSRSGKKAKKRHSQQKYMQKTDGSSGLNEESTSRRDDIAMSDTEEVLSSSSRCASPEDSRSRKTPLEVMQESSPNQLVMSSKKFIGKSSELLKDGYVVALYAKDLSGLHVSRQRTKNGGWFLDTLSNVSKRDPAAQFIIAYRNKDTVGLRSFAAGGKLLQINRRMEFVFASHSFDVWESWSLEGSLDECRLVNCRNSSAVLDVRVEILAMVGDDGITRWID.

The disordered stretch occupies residues 1–21 (MSKIRSSATMPHRDQPSPASP). NAD(+) is bound by residues Ser-91, 147-148 (WL), 169-174 (VGRSVS), Asp-193, 231-237 (CALTNDT), 258-260 (TGS), Asp-284, and 307-311 (RSADY). The disordered stretch occupies residues 341–489 (VSDEEVEESE…PLEVMQESSP (149 aa)). A compositionally biased stretch (acidic residues) spans 342–357 (SDEEVEESEASEEEEQ). Polar residues predominate over residues 369 to 384 (ESTSRQQGESTLTSTE). Basic and acidic residues predominate over residues 385 to 395 (IVRREASELKE). The span at 398–409 (SPGQQHVSQNTA) shows a compositional bias: polar residues. Residues 417-429 (SRSGKKAKKRHSQ) show a composition bias toward basic residues. Residues 430–445 (QKYMQKTDGSSGLNEE) are compositionally biased toward polar residues. The segment covering 470–480 (SPEDSRSRKTP) has biased composition (basic and acidic residues).

This sequence belongs to the D-isomer specific 2-hydroxyacid dehydrogenase family. Plant AN subfamily. In terms of assembly, homodimer. Interacts with KCBP and SUB (via intra-cellular domain); AN is not required for the correct subcellular localization and recycling of SUB. Binds to SOKs proteins polymers (e.g. SOK1, SOK2, SOK3 and SOK4). Interacts with IPGA1 on microtubule upon mechanical stress to regulate microtubule organization. The cofactor is NAD(+). In terms of tissue distribution, expressed in cotyledons, leaves, roots, stems and floral buds.

Its subcellular location is the cytoplasm. It localises to the golgi apparatus. The protein localises to the trans-Golgi network. The protein resides in the cytoskeleton. Functionally, involved in controlling the equilibrium between tubular and stacked structures in the Golgi complex. Required for cortical microtubules (MTs) arrangement that confers cell shape. Cooperatively with IPGA1, negatively regulates cortical microtubules (CMTs) organization in response to mechanical stress and modulates pavement cells morphogenesis leading to puzzle shape, probably in an AAA1/KTN1-dependent manner. Regulates the width of leaves by controlling the polar elongation of leaf cells. Involved in the regulation of trichome branching. Seems to not be able to regulate gene transcription. Regulates epidermal cell divisions and elongation in a non-cell-autonomous manner (regulated by subepidermal cells), but regulates epidermal cell polarity, shape, trichome branching and elongation in a cell-autonomous manner. Negatively regulates growth in the petiole elongation. Prevents lipid peroxidation as a result of abiotic stress response. Is involved in the SUB-dependent signaling mechanism and may act in a membrane trafficking event around the trans-Golgi network. The chain is C-terminal binding protein AN from Arabidopsis thaliana (Mouse-ear cress).